A 147-amino-acid polypeptide reads, in one-letter code: Riboflavin kinase (147 aa).

15 to 20 (GLGEGR) contacts CDP. Positions 44 and 46 each coordinate Mg(2+). Threonine 97 and glutamate 104 together coordinate FMN. 109 to 112 (TELR) contacts CDP.

It belongs to the archaeal riboflavin kinase family. The cofactor is Mg(2+).

It catalyses the reaction riboflavin + CTP = CDP + FMN + H(+). Its pathway is cofactor biosynthesis; FMN biosynthesis; FMN from riboflavin (CTP route): step 1/1. Its function is as follows. Catalyzes the CTP-dependent phosphorylation of riboflavin (vitamin B2) to form flavin mononucleotide (FMN). The sequence is that of Riboflavin kinase from Methanopyrus kandleri (strain AV19 / DSM 6324 / JCM 9639 / NBRC 100938).